Here is a 323-residue protein sequence, read N- to C-terminus: GDSL esterase/lipase At5g03980 (323 aa).

The N-terminal stretch at 1–21 (MSTTKALSLLVFILFVSLVHS) is a signal peptide. Residue S36 is the Nucleophile of the active site. The N-linked (GlcNAc...) asparagine glycan is linked to N77. Residues D294 and H297 contribute to the active site.

It belongs to the 'GDSL' lipolytic enzyme family.

The protein resides in the secreted. The polypeptide is GDSL esterase/lipase At5g03980 (Arabidopsis thaliana (Mouse-ear cress)).